Reading from the N-terminus, the 715-residue chain is Polyribonucleotide nucleotidyltransferase (715 aa).

Mg(2+) is bound by residues D493 and D499. Positions P560–I619 constitute a KH domain. Positions G629 to K697 constitute an S1 motif domain.

It belongs to the polyribonucleotide nucleotidyltransferase family. Mg(2+) is required as a cofactor.

The protein resides in the cytoplasm. It carries out the reaction RNA(n+1) + phosphate = RNA(n) + a ribonucleoside 5'-diphosphate. Its function is as follows. Involved in mRNA degradation. Catalyzes the phosphorolysis of single-stranded polyribonucleotides processively in the 3'- to 5'-direction. The polypeptide is Polyribonucleotide nucleotidyltransferase (Burkholderia cenocepacia (strain HI2424)).